The sequence spans 671 residues: DNA ligase (671 aa).

NAD(+) contacts are provided by residues Asp36 to Asp40, Ser85 to Leu86, and Glu116. Lys118 serves as the catalytic N6-AMP-lysine intermediate. Arg139, Glu176, Lys292, and Lys316 together coordinate NAD(+). Positions 410, 413, 428, and 434 each coordinate Zn(2+). Positions Gln591–Glu671 constitute a BRCT domain.

It belongs to the NAD-dependent DNA ligase family. LigA subfamily. The cofactor is Mg(2+). Requires Mn(2+) as cofactor.

It carries out the reaction NAD(+) + (deoxyribonucleotide)n-3'-hydroxyl + 5'-phospho-(deoxyribonucleotide)m = (deoxyribonucleotide)n+m + AMP + beta-nicotinamide D-nucleotide.. In terms of biological role, DNA ligase that catalyzes the formation of phosphodiester linkages between 5'-phosphoryl and 3'-hydroxyl groups in double-stranded DNA using NAD as a coenzyme and as the energy source for the reaction. It is essential for DNA replication and repair of damaged DNA. This Acidithiobacillus ferrooxidans (strain ATCC 23270 / DSM 14882 / CIP 104768 / NCIMB 8455) (Ferrobacillus ferrooxidans (strain ATCC 23270)) protein is DNA ligase.